An 835-amino-acid polypeptide reads, in one-letter code: Protein translocase subunit SecA 1 (835 aa).

ATP contacts are provided by residues Q85, 103–107, and D492; that span reads GEGKT. Positions 788–807 are disordered; the sequence is VQGEAVHPSSDGEEAKKKPV. Zn(2+)-binding residues include C819, C821, C830, and C831.

This sequence belongs to the SecA family. In terms of assembly, monomer and homodimer. Part of the essential Sec protein translocation apparatus which comprises SecA, SecYEG and auxiliary proteins SecDF. Other proteins may also be involved. Zn(2+) is required as a cofactor.

It is found in the cell membrane. The protein resides in the cytoplasm. The enzyme catalyses ATP + H2O + cellular proteinSide 1 = ADP + phosphate + cellular proteinSide 2.. In terms of biological role, part of the Sec protein translocase complex. Interacts with the SecYEG preprotein conducting channel. Has a central role in coupling the hydrolysis of ATP to the transfer of proteins into and across the cell membrane, serving as an ATP-driven molecular motor driving the stepwise translocation of polypeptide chains across the membrane. This is Protein translocase subunit SecA 1 from Bacillus thuringiensis (strain Al Hakam).